The primary structure comprises 296 residues: Probable alpha-L-glutamate ligase (296 aa).

Residues 104–287 (LQLLARQGID…IATLMITFIE (184 aa)) enclose the ATP-grasp domain. ATP is bound by residues Lys-141, 178–179 (EF), Asp-187, and 211–213 (RSN). Positions 248, 260, and 262 each coordinate Mg(2+). Residues Asp-248, Glu-260, and Asn-262 each coordinate Mn(2+).

This sequence belongs to the RimK family. Requires Mg(2+) as cofactor. Mn(2+) serves as cofactor.

The protein is Probable alpha-L-glutamate ligase of Sodalis glossinidius (strain morsitans).